Here is an 86-residue protein sequence, read N- to C-terminus: YcgL domain-containing protein XCC3997 (86 aa).

In terms of domain architecture, YcgL spans 1–83 (MHAYVYKSQR…PKTVVLAGEC (83 aa)).

This is YcgL domain-containing protein XCC3997 from Xanthomonas campestris pv. campestris (strain ATCC 33913 / DSM 3586 / NCPPB 528 / LMG 568 / P 25).